Reading from the N-terminus, the 252-residue chain is 5'-nucleotidase SurE (252 aa).

4 residues coordinate a divalent metal cation: D8, D9, S40, and N92.

This sequence belongs to the SurE nucleotidase family. It depends on a divalent metal cation as a cofactor.

It localises to the cytoplasm. The enzyme catalyses a ribonucleoside 5'-phosphate + H2O = a ribonucleoside + phosphate. Functionally, nucleotidase that shows phosphatase activity on nucleoside 5'-monophosphates. This is 5'-nucleotidase SurE from Mesorhizobium japonicum (strain LMG 29417 / CECT 9101 / MAFF 303099) (Mesorhizobium loti (strain MAFF 303099)).